We begin with the raw amino-acid sequence, 263 residues long: Dihydropteroate synthase type-3 (263 aa).

The Pterin-binding domain occupies 2–257 (SKIFGIVNIT…DVKSLSDALK (256 aa)). A Mg(2+)-binding site is contributed by Asn9. Ser49 serves as a coordination point for 4-aminobenzoate. 3 residues coordinate (7,8-dihydropterin-6-yl)methyl diphosphate: Asp82, Asn101, and Asp172. Residues Asn101 and Asp172 each contribute to the 6-hydroxymethyl-7,8-dihydropterin site. Residue Phe177 coordinates 4-aminobenzoate. Position 211 (Lys211) interacts with (7,8-dihydropterin-6-yl)methyl diphosphate. Lys211 provides a ligand contact to 6-hydroxymethyl-7,8-dihydropterin. Position 212 (Ser212) interacts with 4-aminobenzoate. 245–247 (RTH) is a (7,8-dihydropterin-6-yl)methyl diphosphate binding site.

It belongs to the DHPS family. It depends on Mg(2+) as a cofactor.

It catalyses the reaction (7,8-dihydropterin-6-yl)methyl diphosphate + 4-aminobenzoate = 7,8-dihydropteroate + diphosphate. It participates in cofactor biosynthesis; tetrahydrofolate biosynthesis; 7,8-dihydrofolate from 2-amino-4-hydroxy-6-hydroxymethyl-7,8-dihydropteridine diphosphate and 4-aminobenzoate: step 1/2. In terms of biological role, catalyzes the condensation of para-aminobenzoate (pABA) with 6-hydroxymethyl-7,8-dihydropterin diphosphate (DHPt-PP) to form 7,8-dihydropteroate (H2Pte), the immediate precursor of folate derivatives. Confers resistance to sulfonamide antibiotics, including sulfamethoxazole (SMX), sulfadiazine and sulfisoxazole. The sequence is that of Dihydropteroate synthase type-3 from Escherichia coli.